Reading from the N-terminus, the 238-residue chain is Ribonuclease PH (238 aa).

Residues Arg86 and 124 to 126 (GTR) contribute to the phosphate site.

The protein belongs to the RNase PH family. Homohexameric ring arranged as a trimer of dimers.

It carries out the reaction tRNA(n+1) + phosphate = tRNA(n) + a ribonucleoside 5'-diphosphate. Its function is as follows. Phosphorolytic 3'-5' exoribonuclease that plays an important role in tRNA 3'-end maturation. Removes nucleotide residues following the 3'-CCA terminus of tRNAs; can also add nucleotides to the ends of RNA molecules by using nucleoside diphosphates as substrates, but this may not be physiologically important. Probably plays a role in initiation of 16S rRNA degradation (leading to ribosome degradation) during starvation. This Escherichia coli O6:K15:H31 (strain 536 / UPEC) protein is Ribonuclease PH.